Here is a 354-residue protein sequence, read N- to C-terminus: UDP-3-O-acylglucosamine N-acyltransferase (354 aa).

Residue H245 is the Proton acceptor of the active site.

It belongs to the transferase hexapeptide repeat family. LpxD subfamily. Homotrimer.

The catalysed reaction is a UDP-3-O-[(3R)-3-hydroxyacyl]-alpha-D-glucosamine + a (3R)-hydroxyacyl-[ACP] = a UDP-2-N,3-O-bis[(3R)-3-hydroxyacyl]-alpha-D-glucosamine + holo-[ACP] + H(+). It functions in the pathway bacterial outer membrane biogenesis; LPS lipid A biosynthesis. Catalyzes the N-acylation of UDP-3-O-acylglucosamine using 3-hydroxyacyl-ACP as the acyl donor. Is involved in the biosynthesis of lipid A, a phosphorylated glycolipid that anchors the lipopolysaccharide to the outer membrane of the cell. The polypeptide is UDP-3-O-acylglucosamine N-acyltransferase (Anaeromyxobacter dehalogenans (strain 2CP-C)).